An 892-amino-acid polypeptide reads, in one-letter code: Protein argonaute 11 (892 aa).

Positions 1-17 are enriched in gly residues; it reads MSSRGGGVGGRRGGPGG. Disordered stretches follow at residues 1 to 68 and 86 to 117; these read MSSR…ALQP and MEAREGASSSSSASAPAVGEVEPPSRAVGALP. Low complexity predominate over residues 86–107; the sequence is MEAREGASSSSSASAPAVGEVE. Residues 248-362 form the PAZ domain; the sequence is SLKQFLAGTY…LPMEVCRIVK (115 aa). The region spanning 541–848 is the Piwi domain; sequence LLVIVLPDAN…AASRARHYLE (308 aa). The tract at residues 850–876 is disordered; it reads GSLPDHGSSSASAAGGSRRNDRGVPVK. Low complexity predominate over residues 856–866; the sequence is GSSSASAAGGS. Residues 867 to 876 are compositionally biased toward basic and acidic residues; it reads RRNDRGVPVK.

Belongs to the argonaute family. Ago subfamily.

Probably involved in the RNA silencing pathway. May bind to short RNAs such as microRNAs (miRNAs) or short interfering RNAs (siRNAs), and represses the translation of mRNAs which are complementary to them. This Oryza sativa subsp. japonica (Rice) protein is Protein argonaute 11 (AGO11).